Consider the following 173-residue polypeptide: MKRFSLAILALVVATGAQAASEKVEMNLVTSQGVGQSIGSVTITETDKGLEFSPDLKALPPGEHGFHIHAKGSCQPATKDGKASAAESAGGHLDPQNTGKHEGPEGAGHLGDLPALVVNNDGKATDAVIAPRLKSLDEIKDKALMVHVGGDNMSDQPKPLGGGGERYACGVIK.

An N-terminal signal peptide occupies residues 1-19 (MKRFSLAILALVVATGAQA). Cu cation contacts are provided by H67, H69, and H92. The tract at residues 72–113 (GSCQPATKDGKASAAESAGGHLDPQNTGKHEGPEGAGHLGDL) is disordered. An intrachain disulfide couples C74 to C169. Positions 92, 101, 109, and 112 each coordinate Zn(2+). H147 is a Cu cation binding site.

This sequence belongs to the Cu-Zn superoxide dismutase family. In terms of assembly, monomer. The cofactor is Cu cation. Requires Zn(2+) as cofactor.

The protein resides in the periplasm. It catalyses the reaction 2 superoxide + 2 H(+) = H2O2 + O2. In terms of biological role, destroys radicals which are normally produced within the cells and which are toxic to biological systems. The chain is Superoxide dismutase [Cu-Zn] (sodC) from Escherichia coli O157:H7.